The sequence spans 85 residues: Small ribosomal subunit protein bS20 (85 aa).

The tract at residues Met1–Ala22 is disordered.

It belongs to the bacterial ribosomal protein bS20 family.

Functionally, binds directly to 16S ribosomal RNA. The chain is Small ribosomal subunit protein bS20 from Bacillus cytotoxicus (strain DSM 22905 / CIP 110041 / 391-98 / NVH 391-98).